The primary structure comprises 301 residues: Oxygen-dependent coproporphyrinogen-III oxidase (301 aa).

Residue Ser-92 coordinates substrate. A divalent metal cation contacts are provided by His-96 and His-106. His-106 serves as the catalytic Proton donor. Position 108 to 110 (108 to 110) interacts with substrate; the sequence is NVR. A divalent metal cation is bound by residues His-145 and His-175. Positions 240 to 275 are important for dimerization; the sequence is YVEFNLVWDRGTLFGLQTGGRTESILMSMPPLVRWE. Residue 258–260 coordinates substrate; sequence GGR.

It belongs to the aerobic coproporphyrinogen-III oxidase family. Homodimer. A divalent metal cation serves as cofactor.

It is found in the cytoplasm. It catalyses the reaction coproporphyrinogen III + O2 + 2 H(+) = protoporphyrinogen IX + 2 CO2 + 2 H2O. It functions in the pathway porphyrin-containing compound metabolism; protoporphyrin-IX biosynthesis; protoporphyrinogen-IX from coproporphyrinogen-III (O2 route): step 1/1. Functionally, involved in the heme biosynthesis. Catalyzes the aerobic oxidative decarboxylation of propionate groups of rings A and B of coproporphyrinogen-III to yield the vinyl groups in protoporphyrinogen-IX. This chain is Oxygen-dependent coproporphyrinogen-III oxidase, found in Cronobacter sakazakii (strain ATCC BAA-894) (Enterobacter sakazakii).